We begin with the raw amino-acid sequence, 255 residues long: MKLIPAIDLMNGKCVRLFKGDFNKRKDFSRKPYEQAKYWEEQGAKCIHIVDLDAAKSGYPSNDQSIKKIAKEVNIPIQIGGGIRSLERIEQLFSYGVDKVIMGTSAIENKELVKNLSTKFPRRIIIGIDAKDGKVSTRGWIEQSDVLATDLVKEFSKFEIASFIVTDINTDGTLEGTNEVFIKKILEITDIPVIASGGVGAISDLLSLTKFEHLGLCGVIVGKALYENKFKISEANNILSPERLQDIPINKDYFA.

The Proton acceptor role is filled by aspartate 8. Aspartate 129 (proton donor) is an active-site residue.

Belongs to the HisA/HisF family.

The protein localises to the cytoplasm. The catalysed reaction is 1-(5-phospho-beta-D-ribosyl)-5-[(5-phospho-beta-D-ribosylamino)methylideneamino]imidazole-4-carboxamide = 5-[(5-phospho-1-deoxy-D-ribulos-1-ylimino)methylamino]-1-(5-phospho-beta-D-ribosyl)imidazole-4-carboxamide. The protein operates within amino-acid biosynthesis; L-histidine biosynthesis; L-histidine from 5-phospho-alpha-D-ribose 1-diphosphate: step 4/9. This Prochlorococcus marinus (strain MIT 9515) protein is 1-(5-phosphoribosyl)-5-[(5-phosphoribosylamino)methylideneamino] imidazole-4-carboxamide isomerase.